The sequence spans 609 residues: (R)-linalool synthase TPS5, chloroplastic (609 aa).

The N-terminal 42 residues, 1-42 (MVSILSNIGMMVVTFKRPSLFTSLRRRSANNIIITKHSHPIS), are a transit peptide targeting the chloroplast. (2E)-geranyl diphosphate contacts are provided by R325, D362, D366, R503, and D506. D362 and D366 together coordinate Mg(2+). A DDXXD motif motif is present at residues 362-366 (DDIYD). Residues D506, T510, and E514 each contribute to the Mg(2+) site.

Belongs to the terpene synthase family. Tpsb subfamily. The cofactor is Mg(2+). Requires Mn(2+) as cofactor. Highly expressed in young fruits and plant tops. Expressed in flower buds and trichomes of petioles and stems. Expressed at low levels in young leaves, stems, petioles, sepals and petals.

The protein resides in the plastid. It localises to the chloroplast. The enzyme catalyses (2E)-geranyl diphosphate + H2O = (R)-linalool + diphosphate. It carries out the reaction (2E,6E)-farnesyl diphosphate + H2O = (6E)-nerolidol + diphosphate. The protein operates within secondary metabolite biosynthesis; terpenoid biosynthesis. Functionally, involved in monoterpene (C10) biosynthesis in glandular trichomes. Converts geranyl diphosphate to linalool in glandular trichomes in response to jasmonate (JA). Can convert farnesyl diphosphate to nerolidol in vitro. The chain is (R)-linalool synthase TPS5, chloroplastic from Solanum lycopersicum (Tomato).